We begin with the raw amino-acid sequence, 313 residues long: Ribosomal RNA small subunit methyltransferase H (313 aa).

S-adenosyl-L-methionine contacts are provided by residues 35–37 (GGH), Asp55, Phe80, Asp102, and Gln109.

Belongs to the methyltransferase superfamily. RsmH family.

Its subcellular location is the cytoplasm. It catalyses the reaction cytidine(1402) in 16S rRNA + S-adenosyl-L-methionine = N(4)-methylcytidine(1402) in 16S rRNA + S-adenosyl-L-homocysteine + H(+). Functionally, specifically methylates the N4 position of cytidine in position 1402 (C1402) of 16S rRNA. The polypeptide is Ribosomal RNA small subunit methyltransferase H (Shewanella baltica (strain OS223)).